A 235-amino-acid chain; its full sequence is Phosphoribosylaminoimidazole-succinocarboxamide synthase (235 aa).

This sequence belongs to the SAICAR synthetase family.

The enzyme catalyses 5-amino-1-(5-phospho-D-ribosyl)imidazole-4-carboxylate + L-aspartate + ATP = (2S)-2-[5-amino-1-(5-phospho-beta-D-ribosyl)imidazole-4-carboxamido]succinate + ADP + phosphate + 2 H(+). The protein operates within purine metabolism; IMP biosynthesis via de novo pathway; 5-amino-1-(5-phospho-D-ribosyl)imidazole-4-carboxamide from 5-amino-1-(5-phospho-D-ribosyl)imidazole-4-carboxylate: step 1/2. The protein is Phosphoribosylaminoimidazole-succinocarboxamide synthase of Streptococcus sanguinis (strain SK36).